Consider the following 378-residue polypeptide: Putative F-box only protein 15 (378 aa).

Positions 5-52 (KRVYRSLPFELVEEILKKTPAESLNRFKSTCKQWYGIITSKRFMYNHL) constitute an F-box domain.

This Arabidopsis thaliana (Mouse-ear cress) protein is Putative F-box only protein 15 (FBX15).